Reading from the N-terminus, the 346-residue chain is Biotin synthase (346 aa).

One can recognise a Radical SAM core domain in the interval 41–265 (NEVQISTLLS…MMPHSYVRLS (225 aa)). The [4Fe-4S] cluster site is built by C56, C60, and C63. Residues C100, C131, C191, and R263 each contribute to the [2Fe-2S] cluster site.

The protein belongs to the radical SAM superfamily. Biotin synthase family. As to quaternary structure, homodimer. [4Fe-4S] cluster is required as a cofactor. The cofactor is [2Fe-2S] cluster.

It catalyses the reaction (4R,5S)-dethiobiotin + (sulfur carrier)-SH + 2 reduced [2Fe-2S]-[ferredoxin] + 2 S-adenosyl-L-methionine = (sulfur carrier)-H + biotin + 2 5'-deoxyadenosine + 2 L-methionine + 2 oxidized [2Fe-2S]-[ferredoxin]. It functions in the pathway cofactor biosynthesis; biotin biosynthesis; biotin from 7,8-diaminononanoate: step 2/2. Functionally, catalyzes the conversion of dethiobiotin (DTB) to biotin by the insertion of a sulfur atom into dethiobiotin via a radical-based mechanism. The sequence is that of Biotin synthase from Pseudoalteromonas translucida (strain TAC 125).